The chain runs to 422 residues: O-mycaminosyltylonolide 6-deoxyallosyltransferase (422 aa).

The protein belongs to the glycosyltransferase 28 family.

The enzyme catalyses 5-O-beta-D-mycaminosyltylonolide + dTDP-6-deoxy-alpha-D-allose = demethyllactenocin + dTDP + H(+). In terms of biological role, involved in the biosynthesis of the macrolide antibiotic tylosin derived from the polyketide lactone tylactone. Catalyzes the transfer of 6-deoxy-alpha-D-allose from dTDP-6-deoxy-alpha-D-allose to O-mycaminosyltylonolide (OMT) to yield demethyllactenocin. In Streptomyces fradiae (Streptomyces roseoflavus), this protein is O-mycaminosyltylonolide 6-deoxyallosyltransferase.